The following is a 1130-amino-acid chain: Putative protein tag-278 (1130 aa).

3 disordered regions span residues Met1 to Asn92, Val104 to Arg129, and Asn974 to Phe1130. 2 coiled-coil regions span residues Ala121–Lys779 and Glu805–Lys1061. The segment covering Arg983 to His993 has biased composition (basic and acidic residues). Over residues Ser999 to Ser1011 the composition is skewed to polar residues. Basic and acidic residues-rich tracts occupy residues Met1013–Pro1057 and Arg1068–Asn1081. The span at Leu1082–Ser1095 shows a compositional bias: low complexity. The span at Thr1116–Phe1130 shows a compositional bias: basic and acidic residues.

This chain is Putative protein tag-278 (tag-278), found in Caenorhabditis elegans.